The primary structure comprises 409 residues: Peptidase T (409 aa).

Histidine 78 contacts Zn(2+). Aspartate 80 is a catalytic residue. Residue aspartate 140 coordinates Zn(2+). Glutamate 174 (proton acceptor) is an active-site residue. Residues glutamate 175, aspartate 197, and histidine 379 each contribute to the Zn(2+) site.

Belongs to the peptidase M20B family. The cofactor is Zn(2+).

It localises to the cytoplasm. It carries out the reaction Release of the N-terminal residue from a tripeptide.. In terms of biological role, cleaves the N-terminal amino acid of tripeptides. The polypeptide is Peptidase T (Aliivibrio salmonicida (strain LFI1238) (Vibrio salmonicida (strain LFI1238))).